Reading from the N-terminus, the 454-residue chain is Protein IQ-DOMAIN 1 (454 aa).

Residues 103–113 (GKSKEEAAAIL) form a calmodulin-binding region. The region spanning 107–136 (EEAAAILIQSTFRGHLARRESQVMRGQERL) is the IQ domain. The segment at 272–454 (WESSEKEQNT…KGVLKAERTP (183 aa)) is disordered. Positions 280–328 (NTTNNDNSSVKNSTNRNSQGGETAKSSNRNKLNSSTKPNTPSASSTATR) are enriched in polar residues. Residues 343–356 (KSSDDEAKSSERNR) are compositionally biased toward basic and acidic residues. Residues 371–388 (LSSSTARRSSNLIPTTKS) show a composition bias toward polar residues. Low complexity predominate over residues 397 to 412 (TSSRVAVTTSTTEESS). Residues 421 to 428 (KKRLSTSA) carry the Nuclear localization signal motif. A compositionally biased stretch (basic and acidic residues) spans 442-454 (KVEKGVLKAERTP).

It belongs to the IQD family. Binds to multiple calmodulin (CaM) in the presence of Ca(2+)(e.g. CaM1 and CaM2) and CaM-like (e.g. CML8 and CML9) proteins. Interacts with KLCR1. As to expression, expressed in roots, flowers, stems, siliques, inflorescence stems and whole shoots. Restricted to the vascular bundles.

Its subcellular location is the nucleus. The protein localises to the nucleolus. The protein resides in the cytoplasm. It localises to the cytoskeleton. Its function is as follows. May be involved in cooperative interactions with calmodulins or calmodulin-like proteins. Modulates expression of glucosinolate pathway genes. May associate with nucleic acids and regulate gene expression at the transcriptional or post-transcriptional level. Recruits KLCR1 and calmodulin proteins to microtubules, thus being a potential scaffold in cellular signaling and trafficking. The polypeptide is Protein IQ-DOMAIN 1 (Arabidopsis thaliana (Mouse-ear cress)).